Here is a 105-residue protein sequence, read N- to C-terminus: Large ribosomal subunit protein bL21 (105 aa).

Belongs to the bacterial ribosomal protein bL21 family. As to quaternary structure, part of the 50S ribosomal subunit. Contacts protein L20.

This protein binds to 23S rRNA in the presence of protein L20. The polypeptide is Large ribosomal subunit protein bL21 (Natranaerobius thermophilus (strain ATCC BAA-1301 / DSM 18059 / JW/NM-WN-LF)).